Reading from the N-terminus, the 182-residue chain is NADH-quinone oxidoreductase subunit B 2 (182 aa).

Positions 57, 58, 123, and 153 each coordinate [4Fe-4S] cluster.

The protein belongs to the complex I 20 kDa subunit family. As to quaternary structure, NDH-1 is composed of 14 different subunits. Subunits NuoB, C, D, E, F, and G constitute the peripheral sector of the complex. [4Fe-4S] cluster is required as a cofactor.

It localises to the cell membrane. It carries out the reaction a quinone + NADH + 5 H(+)(in) = a quinol + NAD(+) + 4 H(+)(out). NDH-1 shuttles electrons from NADH, via FMN and iron-sulfur (Fe-S) centers, to quinones in the respiratory chain. The immediate electron acceptor for the enzyme in this species is believed to be a menaquinone. Couples the redox reaction to proton translocation (for every two electrons transferred, four hydrogen ions are translocated across the cytoplasmic membrane), and thus conserves the redox energy in a proton gradient. This Symbiobacterium thermophilum (strain DSM 24528 / JCM 14929 / IAM 14863 / T) protein is NADH-quinone oxidoreductase subunit B 2.